The chain runs to 340 residues: 3-isopropylmalate dehydrogenase (340 aa).

Residues Arg-88, Arg-98, Arg-122, and Asp-212 each coordinate substrate. Positions 212, 236, and 240 each coordinate Mg(2+). 272–284 (GSAPDIMGKGIAD) contributes to the NAD(+) binding site.

This sequence belongs to the isocitrate and isopropylmalate dehydrogenases family. LeuB type 2 subfamily. As to quaternary structure, homodimer. Mg(2+) serves as cofactor. Requires Mn(2+) as cofactor.

It localises to the cytoplasm. It carries out the reaction (2R,3S)-3-isopropylmalate + NAD(+) = 4-methyl-2-oxopentanoate + CO2 + NADH. It functions in the pathway amino-acid biosynthesis; L-leucine biosynthesis; L-leucine from 3-methyl-2-oxobutanoate: step 3/4. Functionally, catalyzes the oxidation of 3-carboxy-2-hydroxy-4-methylpentanoate (3-isopropylmalate) to 3-carboxy-4-methyl-2-oxopentanoate. The product decarboxylates to 4-methyl-2 oxopentanoate. The sequence is that of 3-isopropylmalate dehydrogenase from Corynebacterium efficiens (strain DSM 44549 / YS-314 / AJ 12310 / JCM 11189 / NBRC 100395).